An 848-amino-acid chain; its full sequence is Leucine--tRNA ligase (848 aa).

The tract at residues 1-21 (MTENTPGTSAPERFDPATADT) is disordered. The 'HIGH' region signature appears at 51–61 (PYPSGRIHIGH). The 'KMSKS' region motif lies at 625–629 (KMSKS). K628 provides a ligand contact to ATP.

It belongs to the class-I aminoacyl-tRNA synthetase family.

The protein resides in the cytoplasm. It carries out the reaction tRNA(Leu) + L-leucine + ATP = L-leucyl-tRNA(Leu) + AMP + diphosphate. This Novosphingobium aromaticivorans (strain ATCC 700278 / DSM 12444 / CCUG 56034 / CIP 105152 / NBRC 16084 / F199) protein is Leucine--tRNA ligase.